A 453-amino-acid polypeptide reads, in one-letter code: Tubulin delta chain (453 aa).

143 to 149 (AGGTGSG) serves as a coordination point for GTP.

This sequence belongs to the tubulin family. As to quaternary structure, found in a complex with TEDC1, TEDC2, TUBE1 and TUBD1.

It is found in the nucleus. The protein resides in the cytoplasm. The protein localises to the cytoskeleton. It localises to the microtubule organizing center. Its subcellular location is the centrosome. It is found in the centriole. The protein resides in the cell projection. The protein localises to the cilium. Its function is as follows. Acts as a positive regulator of hedgehog signaling and regulates ciliary function. This is Tubulin delta chain (TUBD1) from Homo sapiens (Human).